The following is a 404-amino-acid chain: Probable tRNA sulfurtransferase (404 aa).

The region spanning 60–165 is the THUMP domain; that stretch reads QPIVEALKLV…DEAAYISYEE (106 aa). ATP-binding positions include 183 to 184, 208 to 209, Arg-265, Gly-287, and Gln-296; these read ML and HF.

The protein belongs to the ThiI family.

The protein resides in the cytoplasm. It catalyses the reaction [ThiI sulfur-carrier protein]-S-sulfanyl-L-cysteine + a uridine in tRNA + 2 reduced [2Fe-2S]-[ferredoxin] + ATP + H(+) = [ThiI sulfur-carrier protein]-L-cysteine + a 4-thiouridine in tRNA + 2 oxidized [2Fe-2S]-[ferredoxin] + AMP + diphosphate. The catalysed reaction is [ThiS sulfur-carrier protein]-C-terminal Gly-Gly-AMP + S-sulfanyl-L-cysteinyl-[cysteine desulfurase] + AH2 = [ThiS sulfur-carrier protein]-C-terminal-Gly-aminoethanethioate + L-cysteinyl-[cysteine desulfurase] + A + AMP + 2 H(+). It functions in the pathway cofactor biosynthesis; thiamine diphosphate biosynthesis. Its function is as follows. Catalyzes the ATP-dependent transfer of a sulfur to tRNA to produce 4-thiouridine in position 8 of tRNAs, which functions as a near-UV photosensor. Also catalyzes the transfer of sulfur to the sulfur carrier protein ThiS, forming ThiS-thiocarboxylate. This is a step in the synthesis of thiazole, in the thiamine biosynthesis pathway. The sulfur is donated as persulfide by IscS. This is Probable tRNA sulfurtransferase from Streptococcus pyogenes serotype M3 (strain ATCC BAA-595 / MGAS315).